A 338-amino-acid chain; its full sequence is MPQPSRPRKGSLGFGPRKRSTSETPRFNSWPSDDGQPGVQGFAGYKAGMTHVVLVNDEPNSPREGMEETVPVTVIETPPMRAVALRAYEDTPYGQRPLTEVWTDEFHSELDRTLDVPEDHDPDAAEEQIRDAHEAGDLGDLRLITHTVPDAVPSVPKKKPDVMETRVGGGSVSDRLDHALDIVEDGGEHAMNDIFRAGEYADVAGVTKGKGTQGPVKRWGVQKRKGKHARQGWRRRIGNLGPWNPSRVRSTVPQQGQTGYHQRTELNKRLIDIGEGDEPTVDGGFVNYGEVDGPYTLVKGSVPGPDKRLVRFRPAVRPNDQPRLDPEVRYVSNESNQG.

Disordered regions lie at residues 1-44 (MPQP…GFAG), 151-170 (AVPS…VGGG), 206-259 (VTKG…GQTG), and 312-338 (FRPA…SNQG). Positions 22 to 31 (SETPRFNSWP) are enriched in polar residues. The span at 220-237 (GVQKRKGKHARQGWRRRI) shows a compositional bias: basic residues. Polar residues predominate over residues 247-259 (RVRSTVPQQGQTG).

Belongs to the universal ribosomal protein uL3 family. As to quaternary structure, part of the 50S ribosomal subunit. Forms a cluster with proteins L14 and L24e. Interacts weakly with protein L13.

One of the primary rRNA binding proteins, it binds directly near the 3'-end of the 23S rRNA, where it nucleates assembly of the 50S subunit. The protein is Large ribosomal subunit protein uL3 (rpl3) of Haloarcula marismortui (strain ATCC 43049 / DSM 3752 / JCM 8966 / VKM B-1809) (Halobacterium marismortui).